A 101-amino-acid chain; its full sequence is MARFTPLLMILLALVPLYYSLDCRKFSFAPACRGIMLKRSGGHPMIAEQQPMIDNAKAREVQMMELLIRNIEDEALIANSDCVSMSWLRDRLVNAKNEMPQ.

Positions 1 to 20 (MARFTPLLMILLALVPLYYS) are cleaved as a signal peptide.

May be degraded by the nep-2 peptidase. As to expression, expressed in coelomocytes, the ASK sensory neurons and interneurons AIB, AIM and PVQ.

Its subcellular location is the secreted. It is found in the perikaryon. Functionally, negatively regulates chemotaxis and olfactory plasticity which is the change from positive chemotaxis to dispersal after prolonged exposure to an odorant. May be down-regulated in response to pheromone exposure, resulting in promotion of olfactory plasticity. In Caenorhabditis elegans, this protein is Protein snet-1.